The following is a 170-amino-acid chain: Myelin-associated oligodendrocyte basic protein (170 aa).

The segment at 69-170 (SRRATSPQKP…GSPTRAPRFW (102 aa)) is disordered. Positions 82-92 (PAASPVVVRAP) are enriched in low complexity. 3 positions are modified to phosphoserine: S85, S98, and S107. The stretch at 93–101 (PAKPKSPPR) is repeat 1. Residues 93 to 114 (PAKPKSPPRPAKPRSPPIPAKP) show a composition bias toward pro residues. Residues 93 to 119 (PAKPKSPPRPAKPRSPPIPAKPRSPSR) are 3 X 9 AA approximate tandem repeats. The 2; half-length repeat unit spans residues 105–110 (PRSPPI). Copy 3 of the repeat occupies 111–119 (PAKPRSPSR). A compositionally biased stretch (basic and acidic residues) spans 118-130 (SRTERQPRPRPEV). A compositionally biased stretch (low complexity) spans 138-151 (KPPQKSKQPARSSP).

In terms of tissue distribution, expressed predominantly in oligodendrocytes, in CNS myelin of the cerebrum and spinal cord. No expression seen in sciatic nerve.

The protein resides in the cytoplasm. It is found in the perinuclear region. May play a role in compacting or stabilizing the myelin sheath, possibly by binding the negatively charged acidic phospholipids of the cytoplasmic membrane. This Rattus norvegicus (Rat) protein is Myelin-associated oligodendrocyte basic protein (Mobp).